The sequence spans 479 residues: Anaerobic nitric oxide reductase flavorubredoxin (479 aa).

The interval 30–210 (LRGSSYNSYL…PFSRLVTPKI (181 aa)) is zinc metallo-hydrolase. His-79, Glu-81, Asp-83, His-147, Asp-166, and His-227 together coordinate Fe cation. In terms of domain architecture, Flavodoxin-like spans 254 to 393 (ITIFYDTMSN…LCREHGREIA (140 aa)). Residues 260–264 (TMSNN) and 342–369 (AFGS…EMSL) each bind FMN. A Rubredoxin-like domain is found at 423–474 (GPRMQCSVCQWIYDPAKGEPMQDVAPGTPWSEVPDNFLCPECSLGKDVFEEL). Positions 428, 431, 461, and 464 each coordinate Fe cation.

This sequence in the N-terminal section; belongs to the zinc metallo-hydrolase group 3 family. In terms of assembly, homotetramer. Fe cation is required as a cofactor. Requires FMN as cofactor.

The protein localises to the cytoplasm. It participates in nitrogen metabolism; nitric oxide reduction. Functionally, anaerobic nitric oxide reductase; uses NADH to detoxify nitric oxide (NO), protecting several 4Fe-4S NO-sensitive enzymes. Has at least 2 reductase partners, only one of which (NorW, flavorubredoxin reductase) has been identified. NO probably binds to the di-iron center; electrons enter from the NorW at rubredoxin and are transferred sequentially to the FMN center and the di-iron center. Also able to function as an aerobic oxygen reductase. This is Anaerobic nitric oxide reductase flavorubredoxin from Shigella boydii serotype 4 (strain Sb227).